The sequence spans 583 residues: Laccase-14 (583 aa).

The signal sequence occupies residues 1–30; sequence MAPSLGSGSTRILLIVSLLLCLRQQAVVDA. 2 consecutive Plastocyanin-like domains span residues 38–158 and 168–320; these read HVGN…PRPG and AEHT…YDDD. 2 N-linked (GlcNAc...) asparagine glycosylation sites follow: Asn41 and Asn84. Cu cation-binding residues include His88 and His90. Residue Asn126 is glycosylated (N-linked (GlcNAc...) asparagine). His137 and His139 together coordinate Cu cation. Asn179, Asn251, Asn304, Asn338, Asn388, Asn400, Asn446, and Asn464 each carry an N-linked (GlcNAc...) asparagine glycan. Positions 426-567 constitute a Plastocyanin-like 3 domain; that stretch reads DFPDRPPVMF…AMAFDVQDGP (142 aa). Residues His482, His485, His487, His546, Cys547, His548, and His552 each contribute to the Cu cation site.

It belongs to the multicopper oxidase family. The cofactor is Cu cation.

It is found in the secreted. It localises to the extracellular space. Its subcellular location is the apoplast. The catalysed reaction is 4 hydroquinone + O2 = 4 benzosemiquinone + 2 H2O. Lignin degradation and detoxification of lignin-derived products. This chain is Laccase-14 (LAC14), found in Oryza sativa subsp. japonica (Rice).